Reading from the N-terminus, the 186-residue chain is ADP-ribosylation factor-like protein 6 (186 aa).

Gly2 is lipidated: N-myristoyl glycine. GTP-binding positions include 24–31, 69–73, and 130–133; these read GLDNSGKT, DMSGQ, and NKMD.

This sequence belongs to the small GTPase superfamily. Arf family. In terms of assembly, interacts with SEC61B, ARL6IP1, ARL6IP2, ARL6IP3, ARL6IP4 ARL6IP5 and ARL6IP6. Interacts (GTP-bound form) with the BBSome a complex that contains BBS1, BBS2, BBS4, BBS5, BBS7, BBS8/TTC8, BBS9 and BBIP10. Interacts (GTP-free form) with IFT27.

The protein localises to the cell projection. It localises to the cilium membrane. Its subcellular location is the cytoplasm. The protein resides in the cytoskeleton. It is found in the cilium axoneme. The protein localises to the cilium basal body. Functionally, involved in membrane protein trafficking at the base of the ciliary organelle. Mediates recruitment onto plasma membrane of the BBSome complex which would constitute a coat complex required for sorting of specific membrane proteins to the primary cilia. Together with the BBSome complex and LTZL1, controls SMO ciliary trafficking and contributes to the sonic hedgehog (SHH) pathway regulation. May regulate cilia assembly and disassembly and subsequent ciliary signaling events such as the Wnt signaling cascade. Isoform 2 may be required for proper retinal function and organization. The polypeptide is ADP-ribosylation factor-like protein 6 (ARL6) (Bos taurus (Bovine)).